A 2061-amino-acid chain; its full sequence is Putative PWWP domain-containing DNA repair factor 4 (2061 aa).

Disordered regions lie at residues 101–211 (TNLG…SRAR), 382–408 (ALGR…RSSV), 541–586 (TPGT…GDGS), 668–694 (PATL…GDGS), 864–910 (PTPG…SERS), 1046–1072 (PGTM…GDRS), 1159–1182 (ALHG…RGDS), 1205–1383 (KAIA…RDDK), 1521–1548 (PGAL…DSSP), and 1602–1726 (KKGK…KLAN). 2 stretches are compositionally biased toward basic and acidic residues: residues 133-153 (PRED…KREN) and 162-173 (ESKRALRDDRSQ). A compositionally biased stretch (polar residues) spans 397–408 (TPGTLQGNRSSV). Residues 1051 to 1061 (GDSSTARTATA) show a composition bias toward polar residues. The segment covering 1364-1373 (DSSQVHTTIA) has biased composition (polar residues). A compositionally biased stretch (basic and acidic residues) spans 1639–1648 (LKEETQDSRP). Residues 1656 to 1665 (PESSPFSGNI) show a composition bias toward polar residues. The PWWP domain maps to 1756–1817 (RGTMVWFKFQ…KHLDCKEKEK (62 aa)).

It belongs to the PWWP3A family.

The polypeptide is Putative PWWP domain-containing DNA repair factor 4 (Homo sapiens (Human)).